A 225-amino-acid chain; its full sequence is MNLIEFPSLDQTMPNSVISTTLNDLSNWSRLSSLWPLLYGTSCCFIEFAALIGSRFDFDRYGLVPRSSPRQADLILTAGTVTMKMAPSLVRLYEQMPEPKYVIAMGACTITGGMFSTDSYSTVRGVDKLIPVDVYLPGCPPKPEAVIDAITKLRKKISREIYEDRIGSKQENRCFTINHKFHVQRSIHTGNYNKELLYQSPSTSEITSEEFFRSKSSISSHKLVN.

Residues Cys-43, Cys-44, Cys-108, and Cys-139 each coordinate [4Fe-4S] cluster.

This sequence belongs to the complex I 20 kDa subunit family. NDH is composed of at least 16 different subunits, 5 of which are encoded in the nucleus. [4Fe-4S] cluster serves as cofactor.

It is found in the plastid. The protein localises to the chloroplast thylakoid membrane. The catalysed reaction is a plastoquinone + NADH + (n+1) H(+)(in) = a plastoquinol + NAD(+) + n H(+)(out). The enzyme catalyses a plastoquinone + NADPH + (n+1) H(+)(in) = a plastoquinol + NADP(+) + n H(+)(out). NDH shuttles electrons from NAD(P)H:plastoquinone, via FMN and iron-sulfur (Fe-S) centers, to quinones in the photosynthetic chain and possibly in a chloroplast respiratory chain. The immediate electron acceptor for the enzyme in this species is believed to be plastoquinone. Couples the redox reaction to proton translocation, and thus conserves the redox energy in a proton gradient. The polypeptide is NAD(P)H-quinone oxidoreductase subunit K, chloroplastic (Lemna minor (Common duckweed)).